A 188-amino-acid chain; its full sequence is Threonylcarbamoyl-AMP synthase (188 aa).

The region spanning 3-188 (QLQPSAVATT…RSGQILRNGS (186 aa)) is the YrdC-like domain.

It belongs to the SUA5 family. TsaC subfamily.

It is found in the cytoplasm. The enzyme catalyses L-threonine + hydrogencarbonate + ATP = L-threonylcarbamoyladenylate + diphosphate + H2O. Required for the formation of a threonylcarbamoyl group on adenosine at position 37 (t(6)A37) in tRNAs that read codons beginning with adenine. Catalyzes the conversion of L-threonine, HCO(3)(-)/CO(2) and ATP to give threonylcarbamoyl-AMP (TC-AMP) as the acyladenylate intermediate, with the release of diphosphate. The polypeptide is Threonylcarbamoyl-AMP synthase (Shewanella frigidimarina (strain NCIMB 400)).